A 172-amino-acid polypeptide reads, in one-letter code: RNA pyrophosphohydrolase (172 aa).

Positions 6-149 (GYRPNVGIIL…KRDVYRMALK (144 aa)) constitute a Nudix hydrolase domain. The short motif at 38–59 (GGIKYGESPEQAMYRELMEEVG) is the Nudix box element.

It belongs to the Nudix hydrolase family. RppH subfamily. A divalent metal cation is required as a cofactor.

Its function is as follows. Accelerates the degradation of transcripts by removing pyrophosphate from the 5'-end of triphosphorylated RNA, leading to a more labile monophosphorylated state that can stimulate subsequent ribonuclease cleavage. The protein is RNA pyrophosphohydrolase of Methylobacillus flagellatus (strain ATCC 51484 / DSM 6875 / VKM B-1610 / KT).